Reading from the N-terminus, the 418-residue chain is Glutamyl-tRNA reductase (418 aa).

Residues 49-52 (TCNR), Ser109, 114-116 (EPQ), and Gln120 each bind substrate. Residue Cys50 is the Nucleophile of the active site. 189 to 194 (GAGETI) contributes to the NADP(+) binding site.

Belongs to the glutamyl-tRNA reductase family. Homodimer.

The catalysed reaction is (S)-4-amino-5-oxopentanoate + tRNA(Glu) + NADP(+) = L-glutamyl-tRNA(Glu) + NADPH + H(+). It participates in porphyrin-containing compound metabolism; protoporphyrin-IX biosynthesis; 5-aminolevulinate from L-glutamyl-tRNA(Glu): step 1/2. Its function is as follows. Catalyzes the NADPH-dependent reduction of glutamyl-tRNA(Glu) to glutamate 1-semialdehyde (GSA). In Escherichia coli O45:K1 (strain S88 / ExPEC), this protein is Glutamyl-tRNA reductase.